The sequence spans 125 residues: Probable endoribonuclease HigB1 (125 aa).

The protein belongs to the mycobacterial HigB family.

Functionally, toxic component of an atypical, type II toxin-antitoxin chaperone (TAC) system. Probably an endoribonuclease, neutralized by its cognate antitoxin HigA which also requires SecB-like chaperone MT2006 (AC Q7D7P7). The protein is Probable endoribonuclease HigB1 of Mycobacterium tuberculosis (strain CDC 1551 / Oshkosh).